We begin with the raw amino-acid sequence, 532 residues long: Protein DETOXIFICATION 48 (532 aa).

12 helical membrane passes run 65-85, 95-115, 136-156, 174-194, 211-231, 235-255, 279-301, 322-342, 363-383, 397-417, 437-457, and 464-484; these read ISGP…ISML, LAGG…VISG, LGLT…PISF, ISSV…LLSL, VTYS…LLVV, MGVA…VVLL, GWSA…WWWY, GILI…SLGV, IISL…AVLV, ILQL…GNCP, INLG…GFVF, and LWFG…CALL. A disordered region spans residues 496 to 532; sequence EELTSQTPGKSPPLLPIASSKSRSTSGTEDMMRTMLV. Residues 514-523 are compositionally biased toward polar residues; the sequence is SSKSRSTSGT.

The protein belongs to the multi antimicrobial extrusion (MATE) (TC 2.A.66.1) family. As to expression, highly expressed in shoot apices relative to leaves. At vegetative stages, highly expressed at the stipules. At reproductive stages, most highly expressed in the mature pollen. Also expressed in the tips of sepals.

It localises to the golgi apparatus membrane. Its subcellular location is the late endosome membrane. Its function is as follows. Functions as a multidrug and toxin extrusion transporter. Contributes to iron homeostasis during stress responses and senescence. Could be involved in specifying the lateral organ initiation rate. May act as a negative regulator of hypocotyl cell elongation in the light. The chain is Protein DETOXIFICATION 48 from Arabidopsis thaliana (Mouse-ear cress).